Here is a 316-residue protein sequence, read N- to C-terminus: ATP synthase gamma chain (316 aa).

Belongs to the ATPase gamma chain family. In terms of assembly, F-type ATPases have 2 components, CF(1) - the catalytic core - and CF(0) - the membrane proton channel. CF(1) has five subunits: alpha(3), beta(3), gamma(1), delta(1), epsilon(1). CF(0) has three main subunits: a, b and c.

The protein localises to the cellular thylakoid membrane. In terms of biological role, produces ATP from ADP in the presence of a proton gradient across the membrane. The gamma chain is believed to be important in regulating ATPase activity and the flow of protons through the CF(0) complex. This Prochlorococcus marinus subsp. pastoris (strain CCMP1986 / NIES-2087 / MED4) protein is ATP synthase gamma chain.